The chain runs to 117 residues: Ribonuclease P protein component (117 aa).

The protein belongs to the RnpA family. Consists of a catalytic RNA component (M1 or rnpB) and a protein subunit.

It carries out the reaction Endonucleolytic cleavage of RNA, removing 5'-extranucleotides from tRNA precursor.. RNaseP catalyzes the removal of the 5'-leader sequence from pre-tRNA to produce the mature 5'-terminus. It can also cleave other RNA substrates such as 4.5S RNA. The protein component plays an auxiliary but essential role in vivo by binding to the 5'-leader sequence and broadening the substrate specificity of the ribozyme. In Limosilactobacillus reuteri subsp. reuteri (strain JCM 1112) (Lactobacillus reuteri), this protein is Ribonuclease P protein component.